The primary structure comprises 173 residues: Alpha-crystallin A chain (173 aa).

N-acetylmethionine is present on M1. The required for complex formation with BFSP1 and BFSP2 stretch occupies residues 1-63; sequence MDVTIQHPWF…RTVLDSGISE (63 aa). Q6 bears the Deamidated glutamine; partial mark. Position 45 is a phosphoserine (S45). Deamidated glutamine; partial is present on Q50. In terms of domain architecture, sHSP spans 52-162; the sequence is LFRTVLDSGI…SHSERAIPVS (111 aa). K99 carries the post-translational modification N6-acetyllysine. H100 lines the Zn(2+) pocket. Position 101 is a deamidated asparagine; partial (N101). Residues E102 and H107 each coordinate Zn(2+). Phosphoserine is present on S122. N123 is modified (deamidated asparagine; partial). C131 and C142 form a disulfide bridge. A Deamidated glutamine; partial modification is found at Q147. The segment at 147–173 is disordered; it reads QSGMDASHSERAIPVSREEKPSSAPSS. Residues 153–167 are compositionally biased toward basic and acidic residues; the sequence is SHSERAIPVSREEKP. H154 provides a ligand contact to Zn(2+). O-linked (GlcNAc) serine glycosylation occurs at S162.

The protein belongs to the small heat shock protein (HSP20) family. In terms of assembly, heteromer composed of three CRYAA and one CRYAB subunits. Inter-subunit bridging via zinc ions enhances stability, which is crucial as there is no protein turn over in the lens. Can also form homodimers and homotetramers (dimers of dimers) which serve as the building blocks of homooligomers. Within homooligomers, the zinc-binding motif is created from residues of 3 different molecules. His-100 and Glu-102 from one molecule are ligands of the zinc ion, and His-107 and His-154 residues from additional molecules complete the site with tetrahedral coordination geometry. Part of a complex required for lens intermediate filament formation composed of BFSP1, BFSP2 and CRYAA. In terms of processing, undergoes age-dependent proteolytical cleavage at the C-terminus.

The protein localises to the cytoplasm. It is found in the nucleus. In terms of biological role, contributes to the transparency and refractive index of the lens. In its oxidized form (absence of intramolecular disulfide bond), acts as a chaperone, preventing aggregation of various proteins under a wide range of stress conditions. Required for the correct formation of lens intermediate filaments as part of a complex composed of BFSP1, BFSP2 and CRYAA. The protein is Alpha-crystallin A chain (CRYAA) of Procavia capensis (Rock hyrax).